We begin with the raw amino-acid sequence, 155 residues long: Transcriptional repressor NrdR (155 aa).

A zinc finger spans residues 3–34 (CPFCQHDDTQVLDTRVSEEGDSIRRRRRCTSC). Residues 49–139 (PVVVKKNGSR…VYKSFEDVAE (91 aa)) enclose the ATP-cone domain.

The protein belongs to the NrdR family. It depends on Zn(2+) as a cofactor.

In terms of biological role, negatively regulates transcription of bacterial ribonucleotide reductase nrd genes and operons by binding to NrdR-boxes. This chain is Transcriptional repressor NrdR, found in Janthinobacterium sp. (strain Marseille) (Minibacterium massiliensis).